Consider the following 49-residue polypeptide: Large ribosomal subunit protein bL33B (49 aa).

The protein belongs to the bacterial ribosomal protein bL33 family.

The polypeptide is Large ribosomal subunit protein bL33B (Bacillus velezensis (strain DSM 23117 / BGSC 10A6 / LMG 26770 / FZB42) (Bacillus amyloliquefaciens subsp. plantarum)).